The primary structure comprises 82 residues: Small ribosomal subunit protein bS16 (82 aa).

Belongs to the bacterial ribosomal protein bS16 family.

This chain is Small ribosomal subunit protein bS16, found in Dehalococcoides mccartyi (strain ATCC BAA-2266 / KCTC 15142 / 195) (Dehalococcoides ethenogenes (strain 195)).